A 366-amino-acid polypeptide reads, in one-letter code: Peroxisomal (S)-2-hydroxy-acid oxidase GLO4 (366 aa).

Residues Met-1–Asp-360 enclose the FMN hydroxy acid dehydrogenase domain. An a 2-oxocarboxylate-binding site is contributed by Tyr-27. Residues Pro-80–Gly-82, Ser-109, Gln-130–Tyr-132, and Thr-158 contribute to the FMN site. Tyr-132 provides a ligand contact to a 2-oxocarboxylate. Residue Arg-167 participates in a 2-oxocarboxylate binding. FMN-binding residues include Lys-231 and Ser-253. The Proton acceptor role is filled by His-255. Arg-258 is a binding site for a 2-oxocarboxylate. Residues Asp-286–Arg-290 and Gly-309–Arg-310 each bind FMN. A Microbody targeting signal motif is present at residues Ser-364–Leu-366.

Belongs to the FMN-dependent alpha-hydroxy acid dehydrogenase family. Homotetramer. Binds to CATB and CATC; these interactions are disturbed by alpha-hydroxy-2-pyridinemethanesulfonic acid (HPMS) and salicylic acid (SA). FMN is required as a cofactor.

The protein resides in the peroxisome. It catalyses the reaction a (2S)-2-hydroxycarboxylate + O2 = a 2-oxocarboxylate + H2O2. It participates in lipid metabolism; fatty acid metabolism. Oxidase that catalyzes the oxidation of a broad range of 2-hydroxyacids to the corresponding 2-oxoacids, with a reduction of O2 to H2O2. May be involved in a general medium- and long-chain fatty acid catabolic pathway such as alpha-oxidation. In Oryza sativa subsp. japonica (Rice), this protein is Peroxisomal (S)-2-hydroxy-acid oxidase GLO4 (GLO4).